The chain runs to 110 residues: uncharacterized protein (110 aa).

Its subcellular location is the mitochondrion. This is an uncharacterized protein from Arabidopsis thaliana (Mouse-ear cress).